The primary structure comprises 329 residues: tRNA-modifying protein YgfZ (329 aa).

Residues tryptophan 32 and tryptophan 190 each contribute to the folate site.

The protein belongs to the tRNA-modifying YgfZ family.

It is found in the cytoplasm. In terms of biological role, folate-binding protein involved in regulating the level of ATP-DnaA and in the modification of some tRNAs. It is probably a key factor in regulatory networks that act via tRNA modification, such as initiation of chromosomal replication. In Photobacterium profundum (strain SS9), this protein is tRNA-modifying protein YgfZ.